A 311-amino-acid chain; its full sequence is Thioredoxin reductase (311 aa).

35 to 42 contacts FAD; the sequence is ERGIPGGQ. A disulfide bridge links cysteine 134 with cysteine 137. An FAD-binding site is contributed by 277–286; the sequence is DVRDKGLRQI.

This sequence belongs to the class-II pyridine nucleotide-disulfide oxidoreductase family. As to quaternary structure, homodimer. FAD serves as cofactor.

The protein resides in the cytoplasm. It catalyses the reaction [thioredoxin]-dithiol + NADP(+) = [thioredoxin]-disulfide + NADPH + H(+). This is Thioredoxin reductase (trxB) from Staphylococcus aureus (strain COL).